The chain runs to 375 residues: Aminomethyltransferase (375 aa).

Belongs to the GcvT family. The glycine cleavage system is composed of four proteins: P, T, L and H.

The catalysed reaction is N(6)-[(R)-S(8)-aminomethyldihydrolipoyl]-L-lysyl-[protein] + (6S)-5,6,7,8-tetrahydrofolate = N(6)-[(R)-dihydrolipoyl]-L-lysyl-[protein] + (6R)-5,10-methylene-5,6,7,8-tetrahydrofolate + NH4(+). Functionally, the glycine cleavage system catalyzes the degradation of glycine. The chain is Aminomethyltransferase from Ralstonia nicotianae (strain ATCC BAA-1114 / GMI1000) (Ralstonia solanacearum).